The sequence spans 219 residues: Biofilm-associated metzincin protease inhibitor (219 aa).

Residues 4–24 (TWIYAASAAAIGGALIGGWLL) form a helical membrane-spanning segment. Positions 191–204 (DIAARSDPHGDHVD) are enriched in basic and acidic residues. Residues 191–219 (DIAARSDPHGDHVDAPLAELPPMPPPAQG) form a disordered region. Positions 209-219 (ELPPMPPPAQG) are enriched in pro residues.

The protein resides in the cell membrane. Inhibitor of the metalloendopeptidase Mep72. Forms a protein-protein complex with the protease, which is the product of its coregulated adjacent gene, and probably prevents premature protease activity until the protein has been secreted. In Pseudomonas aeruginosa (strain ATCC 15692 / DSM 22644 / CIP 104116 / JCM 14847 / LMG 12228 / 1C / PRS 101 / PAO1), this protein is Biofilm-associated metzincin protease inhibitor.